The primary structure comprises 189 residues: GTPase HRas (189 aa).

Methionine 1 is modified (N-acetylmethionine). The residue at position 2 (threonine 2) is an N-acetylthreonine; in GTPase HRas, N-terminally processed. 10-17 provides a ligand contact to GTP; it reads GAGGVGKS. Residues 32-40 carry the Effector region motif; the sequence is YDPTIEDSY. GTP-binding positions include 57–61 and 116–119; these read DTAGQ and NKCD. Cysteine 118 carries the post-translational modification S-nitrosocysteine. Residues 166 to 185 are hypervariable region; the sequence is HKLRKLNPPDESGPGCMNCK. 2 S-palmitoyl cysteine lipidation sites follow: cysteine 181 and cysteine 184. The residue at position 186 (cysteine 186) is a Cysteine methyl ester. Cysteine 186 carries S-farnesyl cysteine lipidation. Residues 187–189 constitute a propeptide, removed in mature form; that stretch reads VIS.

The protein belongs to the small GTPase superfamily. Ras family. In terms of processing, palmitoylated by the ZDHHC9-GOLGA7 complex. A continuous cycle of de- and re-palmitoylation regulates rapid exchange between plasma membrane and Golgi.

It is found in the cell membrane. It localises to the golgi apparatus membrane. It carries out the reaction GTP + H2O = GDP + phosphate + H(+). With respect to regulation, alternates between an inactive form bound to GDP and an active form bound to GTP. Activated by a guanine nucleotide-exchange factor (GEF) and inactivated by a GTPase-activating protein (GAP). In terms of biological role, ras proteins bind GDP/GTP and possess intrinsic GTPase activity. The polypeptide is GTPase HRas (HRAS) (Gallus gallus (Chicken)).